Consider the following 745-residue polypeptide: Elongation factor G, mitochondrial (745 aa).

The N-terminal 15 residues, 1 to 15 (MSLITRLLTASSPLR), are a transit peptide targeting the mitochondrion. Positions 40-317 (DKIRNIGISA…AVLEYLPNPG (278 aa)) constitute a tr-type G domain. GTP-binding positions include 49-56 (AHIDSGKT), 116-120 (DTPGH), and 170-173 (NKLD).

Belongs to the TRAFAC class translation factor GTPase superfamily. Classic translation factor GTPase family. EF-G/EF-2 subfamily.

It localises to the mitochondrion. It functions in the pathway protein biosynthesis; polypeptide chain elongation. Functionally, mitochondrial GTPase that catalyzes the GTP-dependent ribosomal translocation step during translation elongation. During this step, the ribosome changes from the pre-translocational (PRE) to the post-translocational (POST) state as the newly formed A-site-bound peptidyl-tRNA and P-site-bound deacylated tRNA move to the P and E sites, respectively. Catalyzes the coordinated movement of the two tRNA molecules, the mRNA and conformational changes in the ribosome. Essential during development as it acts as a retrograde signal from mitochondria to the nucleus to slow down cell proliferation if mitochondrial energy output is low. This is Elongation factor G, mitochondrial (ico) from Drosophila ananassae (Fruit fly).